The sequence spans 106 residues: ATP-dependent Clp protease adapter protein ClpS (106 aa).

Belongs to the ClpS family. Binds to the N-terminal domain of the chaperone ClpA.

In terms of biological role, involved in the modulation of the specificity of the ClpAP-mediated ATP-dependent protein degradation. The sequence is that of ATP-dependent Clp protease adapter protein ClpS from Salmonella agona (strain SL483).